We begin with the raw amino-acid sequence, 503 residues long: Cobyric acid synthase (503 aa).

Residues 255–444 (AIDVAVIRCP…MHDLFHNDAF (190 aa)) form the GATase cobBQ-type domain. Cys337 acts as the Nucleophile in catalysis. The active site involves His436.

It belongs to the CobB/CobQ family. CobQ subfamily.

It functions in the pathway cofactor biosynthesis; adenosylcobalamin biosynthesis. Catalyzes amidations at positions B, D, E, and G on adenosylcobyrinic A,C-diamide. NH(2) groups are provided by glutamine, and one molecule of ATP is hydrogenolyzed for each amidation. The protein is Cobyric acid synthase of Geobacillus kaustophilus (strain HTA426).